Consider the following 253-residue polypeptide: Ubiquinone biosynthesis O-methyltransferase (253 aa).

S-adenosyl-L-methionine-binding residues include R41, G72, D93, and L136.

This sequence belongs to the methyltransferase superfamily. UbiG/COQ3 family.

It catalyses the reaction a 3-demethylubiquinol + S-adenosyl-L-methionine = a ubiquinol + S-adenosyl-L-homocysteine + H(+). The enzyme catalyses a 3-(all-trans-polyprenyl)benzene-1,2-diol + S-adenosyl-L-methionine = a 2-methoxy-6-(all-trans-polyprenyl)phenol + S-adenosyl-L-homocysteine + H(+). It participates in cofactor biosynthesis; ubiquinone biosynthesis. Its function is as follows. O-methyltransferase that catalyzes the 2 O-methylation steps in the ubiquinone biosynthetic pathway. The polypeptide is Ubiquinone biosynthesis O-methyltransferase (Azorhizobium caulinodans (strain ATCC 43989 / DSM 5975 / JCM 20966 / LMG 6465 / NBRC 14845 / NCIMB 13405 / ORS 571)).